The following is a 122-amino-acid chain: Small ribosomal subunit protein uS13 (122 aa).

The interval 97–122 (PVRGQRTRTNARTRKGPRKTVAKKKK) is disordered. A compositionally biased stretch (basic residues) spans 101 to 122 (QRTRTNARTRKGPRKTVAKKKK).

This sequence belongs to the universal ribosomal protein uS13 family. As to quaternary structure, part of the 30S ribosomal subunit. Forms a loose heterodimer with protein S19. Forms two bridges to the 50S subunit in the 70S ribosome.

Located at the top of the head of the 30S subunit, it contacts several helices of the 16S rRNA. In the 70S ribosome it contacts the 23S rRNA (bridge B1a) and protein L5 of the 50S subunit (bridge B1b), connecting the 2 subunits; these bridges are implicated in subunit movement. Contacts the tRNAs in the A and P-sites. In Caldanaerobacter subterraneus subsp. tengcongensis (strain DSM 15242 / JCM 11007 / NBRC 100824 / MB4) (Thermoanaerobacter tengcongensis), this protein is Small ribosomal subunit protein uS13.